The following is a 263-amino-acid chain: Proteasome subunit alpha (263 aa).

Residues 229–263 (AALLQDTPPDDADADADAGKKPANDGNLPPNDDKS) are disordered.

It belongs to the peptidase T1A family. The 20S proteasome core is composed of 14 alpha and 14 beta subunits that assemble into four stacked heptameric rings, resulting in a barrel-shaped structure. The two inner rings, each composed of seven catalytic beta subunits, are sandwiched by two outer rings, each composed of seven alpha subunits. The catalytic chamber with the active sites is on the inside of the barrel. Has a gated structure, the ends of the cylinder being occluded by the N-termini of the alpha-subunits. Is capped by the proteasome-associated ATPase, ARC.

It localises to the cytoplasm. It functions in the pathway protein degradation; proteasomal Pup-dependent pathway. With respect to regulation, the formation of the proteasomal ATPase ARC-20S proteasome complex, likely via the docking of the C-termini of ARC into the intersubunit pockets in the alpha-rings, may trigger opening of the gate for substrate entry. Interconversion between the open-gate and close-gate conformations leads to a dynamic regulation of the 20S proteasome proteolysis activity. In terms of biological role, component of the proteasome core, a large protease complex with broad specificity involved in protein degradation. This is Proteasome subunit alpha from Actinosynnema mirum (strain ATCC 29888 / DSM 43827 / JCM 3225 / NBRC 14064 / NCIMB 13271 / NRRL B-12336 / IMRU 3971 / 101).